We begin with the raw amino-acid sequence, 429 residues long: Adenylosuccinate synthetase (429 aa).

GTP-binding positions include 12–18 and 40–42; these read GDEGKGK and GHT. The active-site Proton acceptor is D13. 2 residues coordinate Mg(2+): D13 and G40. IMP is bound by residues 13 to 16, 38 to 41, T128, R142, Q223, T238, and R302; these read DEGK and NAGH. H41 serves as the catalytic Proton donor. 298 to 304 is a binding site for substrate; that stretch reads TTTGRPR. GTP-binding positions include R304, 330-332, and 412-414; these read SID and SVG.

This sequence belongs to the adenylosuccinate synthetase family. In terms of assembly, homodimer. Mg(2+) is required as a cofactor.

The protein resides in the cytoplasm. It catalyses the reaction IMP + L-aspartate + GTP = N(6)-(1,2-dicarboxyethyl)-AMP + GDP + phosphate + 2 H(+). The protein operates within purine metabolism; AMP biosynthesis via de novo pathway; AMP from IMP: step 1/2. Functionally, plays an important role in the de novo pathway of purine nucleotide biosynthesis. Catalyzes the first committed step in the biosynthesis of AMP from IMP. The protein is Adenylosuccinate synthetase of Bacillus cereus (strain ATCC 14579 / DSM 31 / CCUG 7414 / JCM 2152 / NBRC 15305 / NCIMB 9373 / NCTC 2599 / NRRL B-3711).